The primary structure comprises 287 residues: UPF0761 membrane protein MS0032 (287 aa).

6 helical membrane-spanning segments follow: residues 37-57 (MLAI…FPMF), 93-113 (SMSA…INQI), 128-148 (FIFS…FIGM), 174-194 (LLSF…YTLV), 204-224 (AAVG…AFAW), and 238-258 (AMAT…FILL).

The protein belongs to the UPF0761 family.

The protein resides in the cell inner membrane. The protein is UPF0761 membrane protein MS0032 of Mannheimia succiniciproducens (strain KCTC 0769BP / MBEL55E).